Reading from the N-terminus, the 201-residue chain is UPF0637 protein LCA_0842 (201 aa).

This sequence belongs to the UPF0637 family.

The chain is UPF0637 protein LCA_0842 from Latilactobacillus sakei subsp. sakei (strain 23K) (Lactobacillus sakei subsp. sakei).